The following is a 623-amino-acid chain: Bifunctional enzyme CysN/CysC (623 aa).

Residues 1–450 (MQSVIAYLKQ…HVARARIKGQ (450 aa)) are sulfate adenylyltransferase. Residues 14–228 (KPLLRFITCG…YLEALEPADV (215 aa)) form the tr-type G domain. The tract at residues 23 to 30 (GSVDDGKS) is G1. 23 to 30 (GSVDDGKS) serves as a coordination point for GTP. A G2 region spans residues 81–85 (GITID). Positions 102–105 (DCPG) are G3. Residues 102–106 (DCPGH) and 157–160 (NKMD) contribute to the GTP site. The G4 stretch occupies residues 157–160 (NKMD). The segment at 194-196 (SAL) is G5. Residues 451-623 (TPKVLWFTGL…VLSLLGVEGK (173 aa)) are adenylyl-sulfate kinase. 459–466 (GLSGAGKS) is an ATP binding site. Catalysis depends on serine 533, which acts as the Phosphoserine intermediate.

It in the C-terminal section; belongs to the APS kinase family. In the N-terminal section; belongs to the TRAFAC class translation factor GTPase superfamily. Classic translation factor GTPase family. CysN/NodQ subfamily. Heterodimer composed of CysD, the smaller subunit, and CysNC.

The enzyme catalyses sulfate + ATP + H(+) = adenosine 5'-phosphosulfate + diphosphate. It carries out the reaction adenosine 5'-phosphosulfate + ATP = 3'-phosphoadenylyl sulfate + ADP + H(+). The protein operates within sulfur metabolism; hydrogen sulfide biosynthesis; sulfite from sulfate: step 1/3. Its pathway is sulfur metabolism; hydrogen sulfide biosynthesis; sulfite from sulfate: step 2/3. Functionally, with CysD forms the ATP sulfurylase (ATPS) that catalyzes the adenylation of sulfate producing adenosine 5'-phosphosulfate (APS) and diphosphate, the first enzymatic step in sulfur assimilation pathway. APS synthesis involves the formation of a high-energy phosphoric-sulfuric acid anhydride bond driven by GTP hydrolysis by CysN coupled to ATP hydrolysis by CysD. Its function is as follows. APS kinase catalyzes the synthesis of activated sulfate. The sequence is that of Bifunctional enzyme CysN/CysC (cysNC) from Xylella fastidiosa (strain Temecula1 / ATCC 700964).